A 229-amino-acid polypeptide reads, in one-letter code: Heptaprenylglyceryl phosphate synthase (229 aa).

K12 is a sn-glycerol 1-phosphate binding site. Residues D14 and T40 each contribute to the Mg(2+) site. Residues 159–164, G189, and 209–210 contribute to the sn-glycerol 1-phosphate site; these read YIEYSG and GN.

Belongs to the GGGP/HepGP synthase family. Group I subfamily. In terms of assembly, homodimer. Mg(2+) is required as a cofactor.

The enzyme catalyses sn-glycerol 1-phosphate + all-trans-heptaprenyl diphosphate = 3-heptaprenyl-sn-glycero-1-phosphate + diphosphate. It functions in the pathway membrane lipid metabolism; glycerophospholipid metabolism. In terms of biological role, prenyltransferase that catalyzes in vivo the transfer of the heptaprenyl moiety of heptaprenyl pyrophosphate (HepPP; 35 carbon atoms) to the C3 hydroxyl of sn-glycerol-1-phosphate (G1P), producing heptaprenylglyceryl phosphate (HepGP). This reaction is an ether-bond-formation step in the biosynthesis of archaea-type G1P-based membrane lipids found in Bacillales. The protein is Heptaprenylglyceryl phosphate synthase of Staphylococcus carnosus (strain TM300).